The chain runs to 339 residues: MTGSGGYGAGAVPAPHLPVLLAEVLEALEPARGKLILDGTFGAGGYTRALLEAGADVIAIDQDPDAIAGGKPLAQEFAPRLRLERGRFSEMEEIAGEMLDGIVLDVGVSSMQLDQAERGFSFRREGPLDMRMGQEGTSAADVVNKFKAGDLARIFGLLGEERHAGRIARAIEKGRAEKPFRTTGDLAELVERVIGHRPTDKIHPATRVFQGLRIFVNDELGELARALFAAERLLKPGGILAVVTFHSLEDRIVKRFLQARSGPQAQSRHLPEKAAAQPVFEKPMKPVSPGEAETAENPRARSAHLRAARRTAHPAGVQDFKLFGVPALFVTEQLGEKAR.

Residues 44–46 (GGY), Asp-61, Phe-88, Asp-105, and Gln-112 contribute to the S-adenosyl-L-methionine site. The disordered stretch occupies residues 263 to 312 (PQAQSRHLPEKAAAQPVFEKPMKPVSPGEAETAENPRARSAHLRAARRTA). Over residues 301–312 (RSAHLRAARRTA) the composition is skewed to basic residues.

It belongs to the methyltransferase superfamily. RsmH family.

It is found in the cytoplasm. The enzyme catalyses cytidine(1402) in 16S rRNA + S-adenosyl-L-methionine = N(4)-methylcytidine(1402) in 16S rRNA + S-adenosyl-L-homocysteine + H(+). Functionally, specifically methylates the N4 position of cytidine in position 1402 (C1402) of 16S rRNA. This chain is Ribosomal RNA small subunit methyltransferase H, found in Chelativorans sp. (strain BNC1).